We begin with the raw amino-acid sequence, 404 residues long: Propionate kinase PduW (404 aa).

Belongs to the acetokinase family. PduW subfamily.

The protein resides in the cytoplasm. The catalysed reaction is propanoate + ATP = propanoyl phosphate + ADP. Its pathway is polyol metabolism; 1,2-propanediol degradation. The protein operates within organic acid metabolism; propanoate degradation. In terms of biological role, works with phosphate acetyltransferase (pta) to capture exogenous propionate and regenerate propionyl-CoA during degradation of propionate and 1,2-propanediol (1,2-PD). Ectopic expression partially complements a cobB deletion allowing some growth on propionate. Restores growth to an eutQ deletion on ethanolamine and tetrathionate under anoxic conditions. The chain is Propionate kinase PduW from Salmonella typhimurium (strain LT2 / SGSC1412 / ATCC 700720).